Reading from the N-terminus, the 607-residue chain is Zinc finger CCCH domain-containing protein 66 (607 aa).

ANK repeat units follow at residues 57–87 (EERT…DVNR) and 92–124 (DGAT…NPDS). The segment covering 161-178 (LNEVNGQEESEPEVEVEV) has biased composition (acidic residues). Residues 161 to 193 (LNEVNGQEESEPEVEVEVEVSPPRGSERKEYPV) are disordered. C3H1-type zinc fingers lie at residues 254–276 (PCPE…HGIF) and 284–308 (QYRT…HKPE). Positions 342 to 363 (ISPLPIGATTTPPLSPNGVSSP) are disordered. Residues 349–361 (ATTTPPLSPNGVS) are compositionally biased toward polar residues.

The chain is Zinc finger CCCH domain-containing protein 66 from Arabidopsis thaliana (Mouse-ear cress).